Reading from the N-terminus, the 456-residue chain is Bestrophin homolog 18 (456 aa).

A run of 4 helical transmembrane segments spans residues 29–49 (WSAIWIQYSVWLGLYFLVSAI), 83–103 (GFFIAGVLRRFWYLYDIIGFI), 234–254 (IIYPTIVCLAVHMYFFVGILA), and 267–287 (MIDLVFPFMTSIQFVFYMGWL). The disordered stretch occupies residues 416-456 (ASSSRSLERQRSPGSFRMETLTPGSPTNTPIEPIDKIDKKK).

It belongs to the anion channel-forming bestrophin (TC 1.A.46) family. Calcium-sensitive chloride channel subfamily. In terms of assembly, forms oligomers.

It is found in the cell membrane. Functionally, forms chloride channels. This chain is Bestrophin homolog 18 (best-18), found in Caenorhabditis elegans.